Reading from the N-terminus, the 198-residue chain is Holliday junction branch migration complex subunit RuvA (198 aa).

Residues methionine 1–histidine 63 are domain I. Positions serine 64–leucine 142 are domain II. The tract at residues proline 143–histidine 147 is flexible linker. The interval glutamine 148 to glycine 198 is domain III.

The protein belongs to the RuvA family. In terms of assembly, homotetramer. Forms an RuvA(8)-RuvB(12)-Holliday junction (HJ) complex. HJ DNA is sandwiched between 2 RuvA tetramers; dsDNA enters through RuvA and exits via RuvB. An RuvB hexamer assembles on each DNA strand where it exits the tetramer. Each RuvB hexamer is contacted by two RuvA subunits (via domain III) on 2 adjacent RuvB subunits; this complex drives branch migration. In the full resolvosome a probable DNA-RuvA(4)-RuvB(12)-RuvC(2) complex forms which resolves the HJ.

The protein localises to the cytoplasm. Its function is as follows. The RuvA-RuvB-RuvC complex processes Holliday junction (HJ) DNA during genetic recombination and DNA repair, while the RuvA-RuvB complex plays an important role in the rescue of blocked DNA replication forks via replication fork reversal (RFR). RuvA specifically binds to HJ cruciform DNA, conferring on it an open structure. The RuvB hexamer acts as an ATP-dependent pump, pulling dsDNA into and through the RuvAB complex. HJ branch migration allows RuvC to scan DNA until it finds its consensus sequence, where it cleaves and resolves the cruciform DNA. This chain is Holliday junction branch migration complex subunit RuvA, found in Streptococcus equi subsp. zooepidemicus (strain MGCS10565).